A 1217-amino-acid chain; its full sequence is Splicing factor 3B subunit 3 (1217 aa).

Interaction with PHF5A, SF3B1 and SF3B5 stretches follow at residues 105–119 (ETFG…VPGQ) and 145–168 (NRDA…TLVY). Serine 156 bears the Phosphoserine mark. Interaction with SF3B1 and SF3B5 regions lie at residues 193-231 (DNDP…LEEH) and 786-804 (RKFV…ETDH). The interaction with SF3B1 stretch occupies residues 1028 to 1049 (TYPRWVTTASLLDYDTVAGADK). Residues 1100 to 1123 (TVLSLQKTTLIPGGSESLVYTTLS) form an interaction with SF3B5 region. At threonine 1200 the chain carries Phosphothreonine.

This sequence belongs to the RSE1 family. Component of the 17S U2 SnRNP complex, a ribonucleoprotein complex that contains small nuclear RNA (snRNA) U2 and a number of specific proteins. Part of the SF3B subcomplex of the 17S U2 SnRNP complex. SF3B associates with the splicing subcomplex SF3A and a 12S RNA unit to form the U2 small nuclear ribonucleoproteins complex (U2 snRNP). Within the SF3B subcomplex, interacts directly with SF3B1 (via HEAT domain), SF3B5 and PHF5A. Identified in the spliceosome A complex; remains associated with the spliceosome throughout the splicing process. Component of the spliceosome B complex. Identified in the spliceosome C complex. Identified in the spliceosome E complex. Component of the minor (U12-type spliceosome) spliceosome. Within this complex, interacts with SCNM1. Associates with the STAGA transcription coactivator-HAT complex. Interacts with SUPT3H. Interacts with TAF3.

It localises to the nucleus. In terms of biological role, component of the 17S U2 SnRNP complex of the spliceosome, a large ribonucleoprotein complex that removes introns from transcribed pre-mRNAs. The 17S U2 SnRNP complex (1) directly participates in early spliceosome assembly and (2) mediates recognition of the intron branch site during pre-mRNA splicing by promoting the selection of the pre-mRNA branch-site adenosine, the nucleophile for the first step of splicing. Within the 17S U2 SnRNP complex, SF3B3 is part of the SF3B subcomplex, which is required for 'A' complex assembly formed by the stable binding of U2 snRNP to the branchpoint sequence in pre-mRNA. Sequence independent binding of SF3A and SF3B subcomplexes upstream of the branch site is essential, it may anchor U2 snRNP to the pre-mRNA. May also be involved in the assembly of the 'E' complex. Also acts as a component of the minor spliceosome, which is involved in the splicing of U12-type introns in pre-mRNAs. The chain is Splicing factor 3B subunit 3 (SF3B3) from Pongo abelii (Sumatran orangutan).